A 251-amino-acid chain; its full sequence is MDKVIARPYKRPNALCRLICFPWAGGNCSFFIRWCEAFSSIIVVSVIRLAGRECRDTEPFPEDMAEVVNEITNALLKDLQEKPFALFGHSFGSFVSYALAVHLKEKHGLEPVHMFFSGSYGPHSEYFHLMYKLPEVEDSRLLELIHTLGGTPPEFLQNEQITKHLLRVLKEDQKVLVTYPWHDVRKKYFSCDLTCFNGSDEKNHGSEAWIAITSGDTSIYSLPGNHFYLMEPSNETFLIKYITKCIENSDI.

Residues S90 and H226 contribute to the active site.

It belongs to the thioesterase family.

It carries out the reaction (9Z)-octadecenoyl-[ACP] + H2O = (9Z)-octadecenoate + holo-[ACP] + H(+). In fatty acid biosynthesis chain termination and release of the free fatty acid product is achieved by hydrolysis of the thio ester by a thioesterase I, a component of the fatty acid synthetase complex. The chain length of the released fatty acid is usually C16. However, in the mammary glands of non-ruminant mammals, and in the uropygial gland of certain waterfowl there exists a second thioesterase which releases medium-chain length fatty acids (C8 to C2). This Anas platyrhynchos (Mallard) protein is S-acyl fatty acid synthase thioesterase, medium chain.